Here is a 435-residue protein sequence, read N- to C-terminus: Asparagine--tRNA ligase (435 aa).

The protein belongs to the class-II aminoacyl-tRNA synthetase family. In terms of assembly, homodimer.

It localises to the cytoplasm. It carries out the reaction tRNA(Asn) + L-asparagine + ATP = L-asparaginyl-tRNA(Asn) + AMP + diphosphate + H(+). The chain is Asparagine--tRNA ligase from Leptospira interrogans serogroup Icterohaemorrhagiae serovar copenhageni (strain Fiocruz L1-130).